The chain runs to 130 residues: Small ribosomal subunit protein uS9 (130 aa).

The disordered stretch occupies residues R109–R130. Residues K111–R130 are compositionally biased toward basic residues.

The protein belongs to the universal ribosomal protein uS9 family.

The sequence is that of Small ribosomal subunit protein uS9 from Alkaliphilus metalliredigens (strain QYMF).